Consider the following 340-residue polypeptide: Ketol-acid reductoisomerase (NADP(+)) (340 aa).

One can recognise a KARI N-terminal Rossmann domain in the interval 3-182; it reads VQMEYEKDVK…GAARVGLLET (180 aa). Residues 26-29, Arg-49, Ser-53, and 83-86 contribute to the NADP(+) site; these read YGSQ and DEIQ. The active site involves His-108. Position 134 (Gly-134) interacts with NADP(+). Residues 183–328 enclose the KARI C-terminal knotted domain; it reads TYKEETEEDL…AELRKAMPFV (146 aa). Residues Asp-191, Glu-195, Glu-227, and Glu-231 each contribute to the Mg(2+) site. Position 252 (Ser-252) interacts with substrate.

The protein belongs to the ketol-acid reductoisomerase family. Mg(2+) is required as a cofactor.

It catalyses the reaction (2R)-2,3-dihydroxy-3-methylbutanoate + NADP(+) = (2S)-2-acetolactate + NADPH + H(+). It carries out the reaction (2R,3R)-2,3-dihydroxy-3-methylpentanoate + NADP(+) = (S)-2-ethyl-2-hydroxy-3-oxobutanoate + NADPH + H(+). Its pathway is amino-acid biosynthesis; L-isoleucine biosynthesis; L-isoleucine from 2-oxobutanoate: step 2/4. It functions in the pathway amino-acid biosynthesis; L-valine biosynthesis; L-valine from pyruvate: step 2/4. Functionally, involved in the biosynthesis of branched-chain amino acids (BCAA). Catalyzes an alkyl-migration followed by a ketol-acid reduction of (S)-2-acetolactate (S2AL) to yield (R)-2,3-dihydroxy-isovalerate. In the isomerase reaction, S2AL is rearranged via a Mg-dependent methyl migration to produce 3-hydroxy-3-methyl-2-ketobutyrate (HMKB). In the reductase reaction, this 2-ketoacid undergoes a metal-dependent reduction by NADPH to yield (R)-2,3-dihydroxy-isovalerate. The chain is Ketol-acid reductoisomerase (NADP(+)) from Streptococcus thermophilus (strain ATCC BAA-491 / LMD-9).